Reading from the N-terminus, the 39-residue chain is Photosystem II reaction center protein L (39 aa).

Residues 18–38 (SLYLGLLLIAVLGILFSSYFF) form a helical membrane-spanning segment.

It belongs to the PsbL family. In terms of assembly, PSII is composed of 1 copy each of membrane proteins PsbA, PsbB, PsbC, PsbD, PsbE, PsbF, PsbH, PsbI, PsbJ, PsbK, PsbL, PsbM, PsbT, PsbX, PsbY, PsbZ, Psb30/Ycf12, peripheral proteins PsbO, CyanoQ (PsbQ), PsbU, PsbV and a large number of cofactors. It forms dimeric complexes.

It is found in the cellular thylakoid membrane. Functionally, one of the components of the core complex of photosystem II (PSII). PSII is a light-driven water:plastoquinone oxidoreductase that uses light energy to abstract electrons from H(2)O, generating O(2) and a proton gradient subsequently used for ATP formation. It consists of a core antenna complex that captures photons, and an electron transfer chain that converts photonic excitation into a charge separation. This subunit is found at the monomer-monomer interface and is required for correct PSII assembly and/or dimerization. The chain is Photosystem II reaction center protein L from Picosynechococcus sp. (strain ATCC 27264 / PCC 7002 / PR-6) (Agmenellum quadruplicatum).